The chain runs to 310 residues: HTH-type transcriptional activator TtdR (310 aa).

Positions 6 to 63 (PLAKDLQVLVEIVHSGSFSAAAATLGQTPAFVTKRIQILENTLATTLLNRSARGVALT) constitute an HTH lysR-type domain. The segment at residues 23–42 (FSAAAATLGQTPAFVTKRIQ) is a DNA-binding region (H-T-H motif).

It belongs to the LysR transcriptional regulatory family.

Positive regulator required for L-tartrate-dependent anaerobic growth on glycerol. Induces expression of the ttdA-ttdB-ygjE operon. This is HTH-type transcriptional activator TtdR (ttdR) from Escherichia coli O6:H1 (strain CFT073 / ATCC 700928 / UPEC).